A 279-amino-acid chain; its full sequence is Bifunctional protein FolD (279 aa).

NADP(+)-binding positions include 159–161 (GRS), Ser184, and Thr225.

This sequence belongs to the tetrahydrofolate dehydrogenase/cyclohydrolase family. In terms of assembly, homodimer.

It catalyses the reaction (6R)-5,10-methylene-5,6,7,8-tetrahydrofolate + NADP(+) = (6R)-5,10-methenyltetrahydrofolate + NADPH. The enzyme catalyses (6R)-5,10-methenyltetrahydrofolate + H2O = (6R)-10-formyltetrahydrofolate + H(+). It functions in the pathway one-carbon metabolism; tetrahydrofolate interconversion. In terms of biological role, catalyzes the oxidation of 5,10-methylenetetrahydrofolate to 5,10-methenyltetrahydrofolate and then the hydrolysis of 5,10-methenyltetrahydrofolate to 10-formyltetrahydrofolate. In Methanospirillum hungatei JF-1 (strain ATCC 27890 / DSM 864 / NBRC 100397 / JF-1), this protein is Bifunctional protein FolD.